Here is a 293-residue protein sequence, read N- to C-terminus: Glycine--tRNA ligase alpha subunit (293 aa).

This sequence belongs to the class-II aminoacyl-tRNA synthetase family. In terms of assembly, tetramer of two alpha and two beta subunits.

It is found in the cytoplasm. It catalyses the reaction tRNA(Gly) + glycine + ATP = glycyl-tRNA(Gly) + AMP + diphosphate. This is Glycine--tRNA ligase alpha subunit from Picosynechococcus sp. (strain ATCC 27264 / PCC 7002 / PR-6) (Agmenellum quadruplicatum).